The following is a 282-amino-acid chain: Protein NEOXANTHIN-DEFICIENT 1 (282 aa).

Required for neoxanthin biosynthesis. Probably not involved directly in the enzymatic conversion of violaxanthin to neoxanthin. Is necessary but not sufficient for neoxanthin synthesis. The polypeptide is Protein NEOXANTHIN-DEFICIENT 1 (Arabidopsis thaliana (Mouse-ear cress)).